A 143-amino-acid polypeptide reads, in one-letter code: MFLGTYAPKLDEKGRIILPAKFREELASGLVLTRGQEHCVYVFSQREFQSLHEKIRQAPVTSKQARDYLRVFLSGASAEVPDKQNRVTVPPALRSYAGLDRDLVVIGAGSRAEIWDAEAWETYLAKQEAAFANTEEEVIPGLF.

2 consecutive SpoVT-AbrB domains span residues 5-47 and 76-119; these read TYAP…SQRE and ASAE…DAEA.

Belongs to the MraZ family. Forms oligomers.

The protein localises to the cytoplasm. Its subcellular location is the nucleoid. In Leifsonia xyli subsp. xyli (strain CTCB07), this protein is Transcriptional regulator MraZ.